Here is a 319-residue protein sequence, read N- to C-terminus: Probable cystathionine gamma-synthase (319 aa).

Residue Lys197 is modified to N6-(pyridoxal phosphate)lysine.

The protein belongs to the trans-sulfuration enzymes family. As to quaternary structure, homotetramer. It depends on pyridoxal 5'-phosphate as a cofactor.

The protein resides in the cytoplasm. The enzyme catalyses O-succinyl-L-homoserine + L-cysteine = L,L-cystathionine + succinate + H(+). Functionally, catalyzes the formation of L-cystathionine from O-succinyl-L-homoserine (OSHS) and L-cysteine, via a gamma-replacement reaction. In the absence of thiol, catalyzes gamma-elimination to form 2-oxobutanoate, succinate and ammonia. This chain is Probable cystathionine gamma-synthase (metB), found in Herpetosiphon aurantiacus (Herpetosiphon giganteus).